A 79-amino-acid chain; its full sequence is Pyridoxal 5'-phosphate synthase PDX1-like 4 (79 aa).

It belongs to the PdxS/SNZ family.

This chain is Pyridoxal 5'-phosphate synthase PDX1-like 4 (PDX1L4), found in Arabidopsis thaliana (Mouse-ear cress).